The chain runs to 292 residues: Glutamyl-Q tRNA(Asp) synthetase (292 aa).

L-glutamate is bound by residues 11–15 (RFAPS) and Glu47. Positions 14–24 (PSPTGPLHFGS) match the 'HIGH' region motif. Residues Cys103, Cys105, Tyr116, and Cys120 each contribute to the Zn(2+) site. 2 residues coordinate L-glutamate: Tyr173 and Arg191. The short motif at 229–233 (KLSKQ) is the 'KMSKS' region element. Lys232 is a binding site for ATP.

The protein belongs to the class-I aminoacyl-tRNA synthetase family. GluQ subfamily. Zn(2+) serves as cofactor.

Its function is as follows. Catalyzes the tRNA-independent activation of glutamate in presence of ATP and the subsequent transfer of glutamate onto a tRNA(Asp). Glutamate is transferred on the 2-amino-5-(4,5-dihydroxy-2-cyclopenten-1-yl) moiety of the queuosine in the wobble position of the QUC anticodon. The protein is Glutamyl-Q tRNA(Asp) synthetase of Acinetobacter baylyi (strain ATCC 33305 / BD413 / ADP1).